Consider the following 394-residue polypeptide: Putative nickel insertion protein (394 aa).

It belongs to the LarC family.

In Syntrophotalea carbinolica (strain DSM 2380 / NBRC 103641 / GraBd1) (Pelobacter carbinolicus), this protein is Putative nickel insertion protein.